The sequence spans 229 residues: MPSKRFKQLPEKTKDLTADVIENLLATVKKNCTTKFDESIDLSFQVNNKQKKGEVNIRTVVNLPGGTGKKVKVAVVCEDTKAKEAKDAGADIVGSDEFIDKIKAGELNFEKLICTPGMMVKLSKLGKVLGPKGLMPNPKLGSVSEDIKQAVTNAKSGQAEIRNDKDGNIGVSIGKKSFHDDQLLKNFHAILDTLEKEKGNLTLKGDLIKNTFITSSMGVSYKVKLGKAI.

It belongs to the universal ribosomal protein uL1 family. As to quaternary structure, part of the 50S ribosomal subunit.

Functionally, binds directly to 23S rRNA. The L1 stalk is quite mobile in the ribosome, and is involved in E site tRNA release. In terms of biological role, protein L1 is also a translational repressor protein, it controls the translation of the L11 operon by binding to its mRNA. This chain is Large ribosomal subunit protein uL1, found in Pelagibacter ubique (strain HTCC1062).